The primary structure comprises 1448 residues: DNA-directed RNA polymerase subunit beta' (1448 aa).

Zn(2+) is bound by residues cysteine 66, cysteine 68, cysteine 81, and cysteine 84. Aspartate 474, aspartate 476, and aspartate 478 together coordinate Mg(2+). Zn(2+)-binding residues include cysteine 814, cysteine 888, cysteine 895, and cysteine 898. The segment at leucine 1408 to asparagine 1448 is disordered.

It belongs to the RNA polymerase beta' chain family. In terms of assembly, the RNAP catalytic core consists of 2 alpha, 1 beta, 1 beta' and 1 omega subunit. When a sigma factor is associated with the core the holoenzyme is formed, which can initiate transcription. Requires Mg(2+) as cofactor. It depends on Zn(2+) as a cofactor.

The enzyme catalyses RNA(n) + a ribonucleoside 5'-triphosphate = RNA(n+1) + diphosphate. DNA-dependent RNA polymerase catalyzes the transcription of DNA into RNA using the four ribonucleoside triphosphates as substrates. The polypeptide is DNA-directed RNA polymerase subunit beta' (Salinibacter ruber (strain DSM 13855 / M31)).